Consider the following 467-residue polypeptide: Glycine--tRNA ligase (467 aa).

The substrate site is built by Arg100 and Glu175. Residues 207–209, 217–222, 291–292, and 335–338 contribute to the ATP site; these read RNE, FRTREF, EL, and GADR. 222-226 serves as a coordination point for substrate; the sequence is FEQME. 331 to 335 lines the substrate pocket; the sequence is EPSLG.

Belongs to the class-II aminoacyl-tRNA synthetase family. As to quaternary structure, homodimer.

Its subcellular location is the cytoplasm. The catalysed reaction is tRNA(Gly) + glycine + ATP = glycyl-tRNA(Gly) + AMP + diphosphate. Catalyzes the attachment of glycine to tRNA(Gly). The protein is Glycine--tRNA ligase of Clostridium perfringens (strain 13 / Type A).